Consider the following 167-residue polypeptide: Thioredoxin-like protein HI_1115 (167 aa).

A helical transmembrane segment spans residues 10–27; the sequence is GLSLFLTFIVITSILDFV. The Thioredoxin domain occupies 30-167; it reads PVVPEEINKI…VRLFFAEFFG (138 aa). Cys-69 and Cys-72 are joined by a disulfide.

It belongs to the thioredoxin family.

The protein localises to the cell membrane. This chain is Thioredoxin-like protein HI_1115, found in Haemophilus influenzae (strain ATCC 51907 / DSM 11121 / KW20 / Rd).